The chain runs to 2289 residues: Protein Ycf2 (2289 aa).

Position 1643-1650 (1643-1650 (GSIGTGRS)) interacts with ATP.

It belongs to the Ycf2 family.

It localises to the plastid. It is found in the chloroplast stroma. Its function is as follows. Probable ATPase of unknown function. Its presence in a non-photosynthetic plant (Epifagus virginiana) and experiments in tobacco indicate that it has an essential function which is probably not related to photosynthesis. This is Protein Ycf2 from Aethionema grandiflorum (Persian stone-cress).